A 76-amino-acid chain; its full sequence is NADH-ubiquinone oxidoreductase chain 4L (76 aa).

3 helical membrane passes run 1–21 (MTPVHFSFTSAFILGLMGLAF), 29–49 (ALLCLEGMMLSLFIALSLWAL), and 56–76 (YSVAPMLLLAFSACEASAGLA).

The protein belongs to the complex I subunit 4L family.

Its subcellular location is the mitochondrion membrane. It catalyses the reaction a ubiquinone + NADH + 5 H(+)(in) = a ubiquinol + NAD(+) + 4 H(+)(out). Its function is as follows. Core subunit of the mitochondrial membrane respiratory chain NADH dehydrogenase (Complex I) which catalyzes electron transfer from NADH through the respiratory chain, using ubiquinone as an electron acceptor. Part of the enzyme membrane arm which is embedded in the lipid bilayer and involved in proton translocation. This is NADH-ubiquinone oxidoreductase chain 4L (MT-ND4L) from Oncorhynchus masou (Cherry salmon).